Here is a 516-residue protein sequence, read N- to C-terminus: MAGTMDRLEDCNSPETSGTAGDALPSPRVYARRWVFLLVVSLLSCSNAMLWLSFAPVADTIAQHFFLSMDQVNWLSLIYFVLSIPFGMAAIWVLDSVGLRGATILGAWLNFSGSVLRAVPCLPVRIPSPFAFFMSGQSLCALAQTLVVSSPAKLAALWFPEHQRATANMISTMSNPLGLLIANVLSPALVKKADDIPMMLGIYIGPAALACLLATVCLWESVPPTPPSTGAANSTSESFLRGLKLLIQNKAYVLLAVCFGGGIGVFSSFSALLEQILCASGYSNEFSGLCGALFIVFGILGALLLGLYVDRTKHFTEATKIGLCLTSMTSVAFALVSQLQGQTLALAAICSLFGLFGFSVAPVVMELAVECSFPVGEGASAGLIFVLGQAEGMLIMLLLTALTVRRTGPSFSTCQQGEDPLDWTVSLLLLAGLCTLFTCVLVIFFNTPYRRLEAESGGSSSPTMCARDPRTVSPTQVPPLETPGLTPPDEALKEAPGPASVSKGHSEWAETMPRDV.

The segment covering 1-10 has biased composition (basic and acidic residues); that stretch reads MAGTMDRLED. The segment at 1–22 is disordered; sequence MAGTMDRLEDCNSPETSGTAGD. 12 helical membrane-spanning segments follow: residues 34–54, 74–94, 104–124, 139–159, 170–190, 199–219, 253–273, 289–309, 321–341, 344–364, 382–402, and 425–445; these read WVFL…WLSF, WLSL…IWVL, ILGA…CLPV, LCAL…ALWF, ISTM…PALV, MLGI…VCLW, VLLA…SALL, LCGA…GLYV, IGLC…QLQG, LALA…APVV, GLIF…LTAL, and VSLL…VIFF. A disordered region spans residues 453-516; it reads EAESGGSSSP…EWAETMPRDV (64 aa). Residues 504-516 are compositionally biased toward basic and acidic residues; the sequence is GHSEWAETMPRDV.

Belongs to the major facilitator superfamily.

It localises to the membrane. This chain is Solute carrier family 49 member A3 (Slc49a3), found in Mus musculus (Mouse).